The following is a 348-amino-acid chain: Protein pof5 (348 aa).

To yeast YDR306C. As to quaternary structure, interacts with skp1.

It localises to the mitochondrion. This Schizosaccharomyces pombe (strain 972 / ATCC 24843) (Fission yeast) protein is Protein pof5 (pof5).